Reading from the N-terminus, the 160-residue chain is Transcription elongation factor GreA (160 aa).

The stretch at 14-38 (IKAELASLKKERPEVIKAIAEAREE) forms a coiled coil.

This sequence belongs to the GreA/GreB family.

In terms of biological role, necessary for efficient RNA polymerase transcription elongation past template-encoded arresting sites. The arresting sites in DNA have the property of trapping a certain fraction of elongating RNA polymerases that pass through, resulting in locked ternary complexes. Cleavage of the nascent transcript by cleavage factors such as GreA or GreB allows the resumption of elongation from the new 3'terminus. GreA releases sequences of 2 to 3 nucleotides. This is Transcription elongation factor GreA from Maridesulfovibrio salexigens (strain ATCC 14822 / DSM 2638 / NCIMB 8403 / VKM B-1763) (Desulfovibrio salexigens).